Reading from the N-terminus, the 599-residue chain is Elongation factor 4 (599 aa).

The tr-type G domain maps to 5-187 (SHIRNFSIIA…ELVRLVPPPT (183 aa)). GTP is bound by residues 17–22 (DHGKST) and 134–137 (NKMD).

The protein belongs to the TRAFAC class translation factor GTPase superfamily. Classic translation factor GTPase family. LepA subfamily.

It is found in the cell inner membrane. The enzyme catalyses GTP + H2O = GDP + phosphate + H(+). Required for accurate and efficient protein synthesis under certain stress conditions. May act as a fidelity factor of the translation reaction, by catalyzing a one-codon backward translocation of tRNAs on improperly translocated ribosomes. Back-translocation proceeds from a post-translocation (POST) complex to a pre-translocation (PRE) complex, thus giving elongation factor G a second chance to translocate the tRNAs correctly. Binds to ribosomes in a GTP-dependent manner. The sequence is that of Elongation factor 4 from Cellvibrio japonicus (strain Ueda107) (Pseudomonas fluorescens subsp. cellulosa).